The chain runs to 652 residues: 2-oxoglutarate carboxylase large subunit (652 aa).

Residues 26–288 enclose the Pyruvate carboxyltransferase domain; the sequence is ILITDLTPRD…DTGIDMKKLD (263 aa). Substrate contacts are provided by residues 34-38 and R105; that span reads RDGQQ. D35 is an a divalent metal cation binding site. A divalent metal cation-binding residues include K196, H227, and H229. Residue K196 is modified to N6-carboxylysine. Substrate is bound at residue T362. Positions 563–643 constitute a Biotinyl-binding domain; it reads AEEKGIPKAT…TPDDALLRIK (81 aa). Position 609 is an N6-biotinyllysine (K609).

Heterohexadecamer of 8 large subunits and 8 small subunits. It depends on Mg(2+) as a cofactor. Mn(2+) is required as a cofactor. Requires Co(2+) as cofactor. Post-translationally, biotinylated.

It catalyses the reaction hydrogencarbonate + 2-oxoglutarate + ATP = (S)-oxalosuccinate + ADP + phosphate + H(+). The chain is 2-oxoglutarate carboxylase large subunit from Hydrogenobacter thermophilus (strain DSM 6534 / IAM 12695 / TK-6).